A 62-amino-acid polypeptide reads, in one-letter code: Large ribosomal subunit protein uL30 (62 aa).

This sequence belongs to the universal ribosomal protein uL30 family. Part of the 50S ribosomal subunit.

This is Large ribosomal subunit protein uL30 from Hydrogenovibrio crunogenus (strain DSM 25203 / XCL-2) (Thiomicrospira crunogena).